The following is a 231-amino-acid chain: Urease accessory protein UreE (231 aa).

Residues 185-231 (VASPLDEPHGSGLHIHGIHSHGEGHSHGDHDHDHSHSHGDHDHDHKH) are disordered. Residues 204 to 231 (SHGEGHSHGDHDHDHSHSHGDHDHDHKH) are compositionally biased toward basic and acidic residues.

The protein belongs to the UreE family.

The protein resides in the cytoplasm. Involved in urease metallocenter assembly. Binds nickel. Probably functions as a nickel donor during metallocenter assembly. This Yersinia pseudotuberculosis serotype O:1b (strain IP 31758) protein is Urease accessory protein UreE.